The primary structure comprises 870 residues: DNA mismatch repair protein MutS (870 aa).

An ATP-binding site is contributed by 620–627 (GPNMAGKS).

Belongs to the DNA mismatch repair MutS family.

In terms of biological role, this protein is involved in the repair of mismatches in DNA. It is possible that it carries out the mismatch recognition step. This protein has a weak ATPase activity. This chain is DNA mismatch repair protein MutS, found in Syntrophotalea carbinolica (strain DSM 2380 / NBRC 103641 / GraBd1) (Pelobacter carbinolicus).